The chain runs to 461 residues: tRNA modification GTPase MnmE (461 aa).

The (6S)-5-formyl-5,6,7,8-tetrahydrofolate site is built by Arg27, Glu89, and Arg128. One can recognise a TrmE-type G domain in the interval 224 to 382 (GLATAIVGRP…LENAIEKLFF (159 aa)). Asn234 is a binding site for K(+). GTP-binding positions include 234–239 (NVGKSS), 253–259 (TDIAGTT), and 278–281 (DTAG). Ser238 contributes to the Mg(2+) binding site. The K(+) site is built by Thr253, Ile255, and Thr258. A Mg(2+)-binding site is contributed by Thr259. Lys461 lines the (6S)-5-formyl-5,6,7,8-tetrahydrofolate pocket.

It belongs to the TRAFAC class TrmE-Era-EngA-EngB-Septin-like GTPase superfamily. TrmE GTPase family. Homodimer. Heterotetramer of two MnmE and two MnmG subunits. K(+) serves as cofactor.

It localises to the cytoplasm. Functionally, exhibits a very high intrinsic GTPase hydrolysis rate. Involved in the addition of a carboxymethylaminomethyl (cmnm) group at the wobble position (U34) of certain tRNAs, forming tRNA-cmnm(5)s(2)U34. In Lactobacillus gasseri (strain ATCC 33323 / DSM 20243 / BCRC 14619 / CIP 102991 / JCM 1131 / KCTC 3163 / NCIMB 11718 / NCTC 13722 / AM63), this protein is tRNA modification GTPase MnmE.